The primary structure comprises 529 residues: Pheophorbide a oxygenase, chloroplastic (529 aa).

Disordered regions lie at residues 1 to 24 (MPVMAPTASLLLSPRPLPASRRVP) and 46 to 72 (LRVAAPPSVPGEADQAPGETEPSTSSA). The N-terminal 47 residues, 1–47 (MPVMAPTASLLLSPRPLPASRRVPSLPALSASGRLRLRRARADTRLR), are a transit peptide targeting the chloroplast. The Rieske domain occupies 82–194 (WYPVSLVEDL…TLVSQGLLFV (113 aa)). Residues cysteine 124, histidine 126, cysteine 144, and histidine 147 each coordinate [2Fe-2S] cluster.

[2Fe-2S] cluster is required as a cofactor. As to expression, expressed in leaves. Expressed at low levels in roots, stems, panicles and seeds.

It is found in the plastid. It localises to the chloroplast. It catalyses the reaction pheophorbide a + 2 reduced [2Fe-2S]-[ferredoxin] + O2 + 2 H(+) = red chlorophyll catabolite + 2 oxidized [2Fe-2S]-[ferredoxin]. It participates in porphyrin-containing compound metabolism; chlorophyll degradation. Its function is as follows. Catalyzes the key reaction of chlorophyll catabolism, porphyrin macrocycle cleavage of pheophorbide a (pheide a) to a primary fluorescent catabolite (pFCC). Works in a two-step reaction with red chlorophyll catabolite reductase (RCCR). Creates the intermediate RCC through the opening of the porphyrin macrocycle by the introduction of one atom of molecular oxygen at the alpha-methine bridge. Seems to be specific for pheide a. Belongs to the chlorophyll catabolic enzymes (CCEs). May play a role in senescence and response to wounding. The chain is Pheophorbide a oxygenase, chloroplastic from Oryza sativa subsp. japonica (Rice).